Here is a 288-residue protein sequence, read N- to C-terminus: 4-hydroxybenzoate octaprenyltransferase (288 aa).

Helical transmembrane passes span 23 to 43, 46 to 66, 98 to 118, 141 to 161, 163 to 183, 213 to 233, 234 to 254, and 268 to 288; these read IGSL…GRGI, AKIL…GCVV, ILFV…NSMT, LPQV…FAAV, ESLP…TVAY, LIIG…GWLM, NLGG…THQQ, and AFLN…ISYW.

This sequence belongs to the UbiA prenyltransferase family. The cofactor is Mg(2+).

The protein resides in the cell inner membrane. The catalysed reaction is all-trans-octaprenyl diphosphate + 4-hydroxybenzoate = 4-hydroxy-3-(all-trans-octaprenyl)benzoate + diphosphate. It participates in cofactor biosynthesis; ubiquinone biosynthesis. Catalyzes the prenylation of para-hydroxybenzoate (PHB) with an all-trans polyprenyl group. Mediates the second step in the final reaction sequence of ubiquinone-8 (UQ-8) biosynthesis, which is the condensation of the polyisoprenoid side chain with PHB, generating the first membrane-bound Q intermediate 3-octaprenyl-4-hydroxybenzoate. This chain is 4-hydroxybenzoate octaprenyltransferase, found in Yersinia pseudotuberculosis serotype IB (strain PB1/+).